The chain runs to 308 residues: ADP-L-glycero-D-manno-heptose-6-epimerase (308 aa).

Residues methionine 10 to isoleucine 11, aspartate 31 to asparagine 32, lysine 38, lysine 53, glutamate 75 to serine 79, and asparagine 92 contribute to the NADP(+) site. Tyrosine 139 (proton acceptor) is an active-site residue. Lysine 143 contributes to the NADP(+) binding site. Residue asparagine 168 coordinates substrate. NADP(+) contacts are provided by valine 169 and lysine 177. Catalysis depends on lysine 177, which acts as the Proton acceptor. Residues serine 179, histidine 186, phenylalanine 200–serine 203, arginine 208, and tyrosine 271 each bind substrate.

The protein belongs to the NAD(P)-dependent epimerase/dehydratase family. HldD subfamily. In terms of assembly, homopentamer. NADP(+) is required as a cofactor.

The enzyme catalyses ADP-D-glycero-beta-D-manno-heptose = ADP-L-glycero-beta-D-manno-heptose. It functions in the pathway nucleotide-sugar biosynthesis; ADP-L-glycero-beta-D-manno-heptose biosynthesis; ADP-L-glycero-beta-D-manno-heptose from D-glycero-beta-D-manno-heptose 7-phosphate: step 4/4. Functionally, catalyzes the interconversion between ADP-D-glycero-beta-D-manno-heptose and ADP-L-glycero-beta-D-manno-heptose via an epimerization at carbon 6 of the heptose. This is ADP-L-glycero-D-manno-heptose-6-epimerase from Mannheimia succiniciproducens (strain KCTC 0769BP / MBEL55E).